The primary structure comprises 406 residues: GTPase Obg (406 aa).

The Obg domain occupies 1 to 159; sequence MKFVDEVSIF…RDLKLELKVL (159 aa). The disordered stretch occupies residues 126–149; that stretch reads GNTRFKSSTNRAPRQTTPGKPGES. Over residues 129–143 the composition is skewed to polar residues; sequence RFKSSTNRAPRQTTP. Residues 160–333 form the OBG-type G domain; sequence ADVGLLGLPN…ICRDIMHYLE (174 aa). GTP-binding positions include 166–173, 191–195, 213–216, 283–286, and 314–316; these read GLPNAGKS, FTTLV, DIPG, NKMD, and SAI. 2 residues coordinate Mg(2+): S173 and T193. The interval 376–406 is disordered; sequence SGVRSVDDIDEDDDFFDDEDDDGPEIIYVRD. Residues 383-399 show a composition bias toward acidic residues; that stretch reads DIDEDDDFFDDEDDDGP.

The protein belongs to the TRAFAC class OBG-HflX-like GTPase superfamily. OBG GTPase family. In terms of assembly, monomer. Requires Mg(2+) as cofactor.

It is found in the cytoplasm. In terms of biological role, an essential GTPase which binds GTP, GDP and possibly (p)ppGpp with moderate affinity, with high nucleotide exchange rates and a fairly low GTP hydrolysis rate. Plays a role in control of the cell cycle, stress response, ribosome biogenesis and in those bacteria that undergo differentiation, in morphogenesis control. This Ectopseudomonas mendocina (strain ymp) (Pseudomonas mendocina) protein is GTPase Obg.